The chain runs to 2303 residues: Adenomatous polyposis coli protein 2 (2303 aa).

Residues 8–59 are a coiled coil; the sequence is YEQLVRQVEALKAENSHLRQELRDNSSHLSKLETETSGMKEVLKHLQGKLEQ. 2 disordered regions span residues 94-120 and 247-270; these read PTLGPEPAARTPEGSPVHGSGPSKDSF and VPVDEDPETEVPTHPEDGTPQPGN. 6 ARM repeats span residues 302–341, 479–518, 522–562, 566–609, 615–654, and 657–696; these read PESCVAMRRSGCLPLLLQILHGTEAAAGGRAGAPGAPGAK, ANKATLCARRGCMEAIVAQLASDSEELHQVVSSILRNLSW, INSK…NLSA, ENKA…NVSS, EDYRQVLRDHNCLQTLLQHLTSHSLTIVSNACGTLWNLSA, and ARDQELLWDLGAVGMLRNLVHSKHKMIAMGSAAALRNLLA. 2 disordered regions span residues 744–764 and 816–835; these read KQGPPAAEAATKKPLPPLRHL and LARTPPTRRGGKEAEKDTSG. Residues 825 to 834 show a composition bias toward basic and acidic residues; sequence GGKEAEKDTS. Residues 840 to 864 adopt a coiled-coil conformation; it reads AAKAKAKLALAVARIDQLVEDISAL. 4 disordered regions span residues 867–908, 953–986, 1069–1152, and 1173–1228; these read SSDD…AGSR, RREDPRCGQPRPSRLDLDLPGCQAEPPAREATSA, RCSS…ENYV, and SPSI…EATQ. Low complexity predominate over residues 869–878; the sequence is DDSFSLSSGD. Copy 1 of the repeat occupies 1058 to 1077; that stretch reads LAAQEGPLSLSRCSSLSSLS. Residues 1058-1587 form a 5 X 20 AA approximate repeat of F-X-V-E-X-T-P-X-C-F-S-R-X-S-S-L-S-S-L-S region; sequence LAAQEGPLSL…SLSSSASSLS (530 aa). The interaction with CTNNB1 stretch occupies residues 1058–1587; the sequence is LAAQEGPLSL…SLSSSASSLS (530 aa). The span at 1069–1084 shows a compositional bias: low complexity; that stretch reads RCSSLSSLSSAGRPGP. Positions 1088–1101 are enriched in acidic residues; the sequence is GDLDDSDSSLEGLE. The segment covering 1143 to 1152 has biased composition (polar residues); sequence TPSSSSENYV. The stretch at 1150–1169 is repeat 2; sequence NYVQETPLVLSRCSSVSSLG. Positions 1173 to 1186 are enriched in low complexity; sequence SPSIASSIPSEPCS. Polar residues predominate over residues 1202 to 1212; that stretch reads PGQTMPPSRSK. Repeat 3 spans residues 1263–1282; the sequence is FTVEKPDENFSCASSLSALA. 5 disordered regions span residues 1307–1335, 1382–1497, 1510–1684, 1724–2031, and 2046–2232; these read GAGGAGLHFAGHRRREEGPAPTGSRPRGA, PAQE…QSLC, YGND…LDSV, LSVG…RGRP, and LRAA…DVDG. Positions 1390–1410 are enriched in polar residues; the sequence is TDSAEGTPVNFSSAASLSDET. Residues 1391–1410 form repeat 4; sequence DSAEGTPVNFSSAASLSDET. Composition is skewed to basic and acidic residues over residues 1477–1489 and 1537–1548; these read ADKDGSKPGRTRG and FTRERPQGRKEA. The stretch at 1568–1587 is repeat 5; the sequence is LIADETPPCYSLSSSASSLS. The span at 1578–1589 shows a compositional bias: low complexity; it reads SLSSSASSLSEP. Phosphoserine is present on residues Ser-1585 and Ser-1587. The segment covering 1638–1654 has biased composition (basic residues); that stretch reads PRRRPPVSGLRRRKPRA. Composition is skewed to basic and acidic residues over residues 1655 to 1671 and 1739 to 1755; these read TRLDERPAEGSRERGEE and RQAEGEMGSARRPEKRG. Over residues 1819–1830 the composition is skewed to low complexity; the sequence is APPCLAQPAAPA. The tract at residues 1821–1900 is required for localization to microtubules and function in microtubule stabilization; that stretch reads PCLAQPAAPA…PPVTQAAGAL (80 aa). The span at 1851 to 1860 shows a compositional bias: polar residues; sequence ELATLSQPPR. 5 stretches are compositionally biased toward low complexity: residues 1868-1886, 1971-1984, 2011-2026, 2049-2062, and 2113-2123; these read LAKTPSSSSSQTSPASQPL, GLVRVASALSSGSE, LSSAESAASAPQGASP, APRQGPAPARQRPP, and GAVPAAPASAD. Positions 2067-2144 are interaction with MAPRE1 and MAPRE3; that stretch reads SPGERPARRT…PLPRVAAPGT (78 aa). Basic and acidic residues predominate over residues 2124–2135; it reads AARRSSDGEPRP. The segment covering 2200–2209 has biased composition (polar residues); that stretch reads KTNSSTSPSL.

This sequence belongs to the adenomatous polyposis coli (APC) family. In terms of assembly, interacts with PSRC1. Interacts with APC. Interacts with CTNNB1. Interacts with MAPRE1 and MAPRE3. Interacts with TP53BP. Interacts possibly with AXIN2. In terms of tissue distribution, widely expressed (at protein level). Specifically expressed in the CNS.

The protein resides in the cytoplasm. Its subcellular location is the cytoskeleton. It is found in the golgi apparatus. It localises to the perinuclear region. In terms of biological role, stabilizes microtubules and may regulate actin fiber dynamics through the activation of Rho family GTPases. May also function in Wnt signaling by promoting the rapid degradation of CTNNB1. This Homo sapiens (Human) protein is Adenomatous polyposis coli protein 2.